A 39-amino-acid chain; its full sequence is Potassium channel toxin alpha-KTx 2.2 (39 aa).

Intrachain disulfides connect cysteine 7/cysteine 29, cysteine 13/cysteine 34, and cysteine 17/cysteine 36. Positions 37 to 39 (YPH) are interaction with Kv1.3 channels.

It belongs to the short scorpion toxin superfamily. Potassium channel inhibitor family. Alpha-KTx 02 subfamily. Expressed by the venom gland.

It is found in the secreted. In terms of biological role, potent inhibitor of voltage-gated potassium channels such as Kv1.1/KCNA1 (IC(50)=0.144 nM), Kv1.2/KCNA2 (IC(50)=0.675 nM), Kv1.3/KCNA3 (IC(50)=0.23 nM) and Shaker (Kd=160 nM). Suppresses expression of the Kv1.3/KCNA3 channel in lipopolysaccharide (LPS)-stimulated mouse macrophages. Down-regulates secretion of nitric oxide (NO) and inflammatory cytokines, such as TNF-alpha/TNF, IL-1beta/IL1B and IL6, in LPS-stimulated mouse macrophages in a manner dependent on Kv1.3/KCNA3 channel blockage. Reduces activation of MAPK and NF-kappa-B signaling pathways in LPS-stimulated mouse macrophages. Modulates intracellular Ca(2+) signaling in human PMA/ionomycin-triggered T-cells. Interferes with the activation of the MAPK, NF-kappa-B and NFATc1 pathways in human PMA/ionomycin-triggered T-cells. Reduces proliferation of human PMA/ionomycin-triggered T-cells. Down-regulates secretion of cytokines, such as TNF-alpha/TNF and IL2, in human PMA/ionomycin-triggered T-cells. The sequence is that of Potassium channel toxin alpha-KTx 2.2 from Centruroides margaritatus (Central American bark Scorpion).